Reading from the N-terminus, the 215-residue chain is Probable transaldolase (215 aa).

K83 serves as the catalytic Schiff-base intermediate with substrate.

The protein belongs to the transaldolase family. Type 3B subfamily.

Its subcellular location is the cytoplasm. It catalyses the reaction D-sedoheptulose 7-phosphate + D-glyceraldehyde 3-phosphate = D-erythrose 4-phosphate + beta-D-fructose 6-phosphate. It functions in the pathway carbohydrate degradation; pentose phosphate pathway; D-glyceraldehyde 3-phosphate and beta-D-fructose 6-phosphate from D-ribose 5-phosphate and D-xylulose 5-phosphate (non-oxidative stage): step 2/3. In terms of biological role, transaldolase is important for the balance of metabolites in the pentose-phosphate pathway. This chain is Probable transaldolase (tal), found in Clostridium acetobutylicum (strain ATCC 824 / DSM 792 / JCM 1419 / IAM 19013 / LMG 5710 / NBRC 13948 / NRRL B-527 / VKM B-1787 / 2291 / W).